The chain runs to 345 residues: Phosphate acyltransferase (345 aa).

Belongs to the PlsX family. In terms of assembly, homodimer. Probably interacts with PlsY.

The protein localises to the cytoplasm. It catalyses the reaction a fatty acyl-[ACP] + phosphate = an acyl phosphate + holo-[ACP]. Its pathway is lipid metabolism; phospholipid metabolism. In terms of biological role, catalyzes the reversible formation of acyl-phosphate (acyl-PO(4)) from acyl-[acyl-carrier-protein] (acyl-ACP). This enzyme utilizes acyl-ACP as fatty acyl donor, but not acyl-CoA. The sequence is that of Phosphate acyltransferase from Photorhabdus laumondii subsp. laumondii (strain DSM 15139 / CIP 105565 / TT01) (Photorhabdus luminescens subsp. laumondii).